The following is a 360-amino-acid chain: MPTQFAPLQNDTFLRALLRQPTEYTPLWLMRQAGRYLPEYRATRARAGSFLGLAKNPDFATEVTLQPLDRYKLDAAILFSDILTVPDAMGLGLYFIEGEGPKFERPLRDEKAVQALKVPELGSLQYVFDAVTQIRTELKGRVPLIGFTGSPWTLACYMVEGGGSDDFRTVKAMLYNRPDLMHHILQTNALTVAAYLNAQIDAGAQAVMMFDTWGGALADGAYQQFSLHYMREVMKHVKTEKDGVRIPSIVFTKGGGLWLKEIAAVGADAVGLDWTVNLGAARAKVGERVALQGNLDPSILFAQPDQIRAEVAKVLESFGKHSAGSGHVFNLGHGISQFTPPEAVTVLVDAVHELSRPLHK.

Substrate-binding positions include 31 to 35, Asp81, Tyr157, Thr212, and His333; that span reads RQAGR.

It belongs to the uroporphyrinogen decarboxylase family. As to quaternary structure, homodimer.

It is found in the cytoplasm. The enzyme catalyses uroporphyrinogen III + 4 H(+) = coproporphyrinogen III + 4 CO2. It participates in porphyrin-containing compound metabolism; protoporphyrin-IX biosynthesis; coproporphyrinogen-III from 5-aminolevulinate: step 4/4. Functionally, catalyzes the decarboxylation of four acetate groups of uroporphyrinogen-III to yield coproporphyrinogen-III. The chain is Uroporphyrinogen decarboxylase from Janthinobacterium sp. (strain Marseille) (Minibacterium massiliensis).